We begin with the raw amino-acid sequence, 822 residues long: Glycerol-3-phosphate acyltransferase (822 aa).

The HXXXXD motif motif lies at 304–309; the sequence is CHRSHM.

It belongs to the GPAT/DAPAT family.

The protein localises to the cell inner membrane. The enzyme catalyses sn-glycerol 3-phosphate + an acyl-CoA = a 1-acyl-sn-glycero-3-phosphate + CoA. Its pathway is phospholipid metabolism; CDP-diacylglycerol biosynthesis; CDP-diacylglycerol from sn-glycerol 3-phosphate: step 1/3. This chain is Glycerol-3-phosphate acyltransferase, found in Yersinia enterocolitica serotype O:8 / biotype 1B (strain NCTC 13174 / 8081).